Here is a 148-residue protein sequence, read N- to C-terminus: 3-hydroxyacyl-[acyl-carrier-protein] dehydratase FabZ (148 aa).

Residue H48 is part of the active site.

Belongs to the thioester dehydratase family. FabZ subfamily.

The protein localises to the cytoplasm. The catalysed reaction is a (3R)-hydroxyacyl-[ACP] = a (2E)-enoyl-[ACP] + H2O. Functionally, involved in unsaturated fatty acids biosynthesis. Catalyzes the dehydration of short chain beta-hydroxyacyl-ACPs and long chain saturated and unsaturated beta-hydroxyacyl-ACPs. This chain is 3-hydroxyacyl-[acyl-carrier-protein] dehydratase FabZ, found in Campylobacter concisus (strain 13826).